The following is a 34-amino-acid chain: Trypsin inhibitor (34 aa).

2 cysteine pairs are disulfide-bonded: C7–C29 and C11–C25.

It localises to the secreted. Its function is as follows. Inhibits trypsin. The sequence is that of Trypsin inhibitor from Veronica hederifolia (Ivy-leaved speedwell).